The following is a 260-amino-acid chain: Proteasome subunit alpha type-1 (260 aa).

Positions 240 to 260 (PRTTGGAAAAAAPGGAEPMQM) are disordered. The segment covering 244–260 (GGAAAAAAPGGAEPMQM) has biased composition (low complexity).

Belongs to the peptidase T1A family. In terms of assembly, the 26S proteasome consists of a 20S proteasome core and two 19S regulatory subunits. The 20S proteasome core is composed of 28 subunits that are arranged in four stacked rings, resulting in a barrel-shaped structure. The two end rings are each formed by seven alpha subunits, and the two central rings are each formed by seven beta subunits. The catalytic chamber with the active sites is on the inside of the barrel.

The protein resides in the cytoplasm. The protein localises to the nucleus. The proteasome is a multicatalytic proteinase complex which is characterized by its ability to cleave peptides with Arg, Phe, Tyr, Leu, and Glu adjacent to the leaving group at neutral or slightly basic pH. The proteasome has an ATP-dependent proteolytic activity. In Caenorhabditis elegans, this protein is Proteasome subunit alpha type-1 (pas-6).